The sequence spans 241 residues: Probable 2-phosphosulfolactate phosphatase (241 aa).

This sequence belongs to the ComB family. It depends on Mg(2+) as a cofactor.

It catalyses the reaction (2R)-O-phospho-3-sulfolactate + H2O = (2R)-3-sulfolactate + phosphate. In Microcystis aeruginosa (strain NIES-843 / IAM M-2473), this protein is Probable 2-phosphosulfolactate phosphatase.